The following is a 460-amino-acid chain: Ammonium transporter Rh type C (460 aa).

Residues 1–9 are Cytoplasmic-facing; the sequence is MAWNTNLRW. A helical transmembrane segment spans residues 10–30; that stretch reads RLPLTCLLLQVIMVILFGVFV. Topologically, residues 31–61 are extracellular; that stretch reads RYDPDADAHWIDERLGRNISSDMDNEFYYRY. N48 carries N-linked (GlcNAc...) asparagine glycosylation. A helical transmembrane segment spans residues 62–82; it reads PSFQDVHVMIFVGFGFLMTFL. Topologically, residues 83 to 86 are cytoplasmic; the sequence is QRYG. The helical transmembrane segment at 87–107 threads the bilayer; the sequence is FSSVGFNFLLAAFGIQWALLM. The Extracellular segment spans residues 108–125; that stretch reads QGWLHSFHSGYIVLGVEN. A helical membrane pass occupies residues 126–145; it reads LINADFCVGSVCVAFGAVLG. Topologically, residues 146–151 are cytoplasmic; it reads KVSPVQ. A helical transmembrane segment spans residues 152–174; sequence LLIMTLFQVTLFSVNEFILLNLL. Topologically, residues 175–179 are extracellular; it reads EVKDA. A helical transmembrane segment spans residues 180 to 200; the sequence is GGSMTIHTFGAYFGLTVTWIL. The Cytoplasmic segment spans residues 201–219; it reads YRPNLYQSKERQSSVYHSD. Residues 220-240 form a helical membrane-spanning segment; it reads LFAMIGTLFLWMYWPSFNSAV. Topologically, residues 241-251 are extracellular; the sequence is SHHGDAQHRAA. The helical transmembrane segment at 252-272 threads the bilayer; that stretch reads INTYCSLAACVLTSVALSSAL. Residues 273–285 lie on the Cytoplasmic side of the membrane; it reads HKKGKLDMVHIQN. Residues 286-306 traverse the membrane as a helical segment; sequence ATLAGGVAVGTAAEMMLMPYG. Position 307 (S307) is a topological domain, extracellular. A helical membrane pass occupies residues 308 to 328; that stretch reads LIVGFICGIISTLGFVYLTPF. Residues 329-340 lie on the Cytoplasmic side of the membrane; sequence LESRLRIQDTCG. A helical membrane pass occupies residues 341-361; sequence IHNLHGMPGIIGGIVGAVTAA. The Extracellular portion of the chain corresponds to 362-396; the sequence is SANTQQYGQKGLAHAFDIDATKTTWTASMQGSFQA. A helical transmembrane segment spans residues 397–417; the sequence is AGLFVSLAMALVGGLIVGVIL. Topologically, residues 418–460 are cytoplasmic; sequence KLPFWGQPADENCFEDAIYWEIPEDQKSLVSRSEDPTLRPTEP.

Belongs to the ammonium transporter (TC 2.A.49) family. Rh subfamily. In terms of assembly, homotrimer. In terms of processing, N-glycosylated.

It is found in the cell membrane. The protein localises to the apical cell membrane. The enzyme catalyses NH4(+)(in) = NH4(+)(out). It carries out the reaction methylamine(out) = methylamine(in). The catalysed reaction is CO2(out) = CO2(in). Its function is as follows. Ammonium transporter involved in the maintenance of acid-base homeostasis. Transports ammonium and its related derivative methylammonium across the plasma membrane of epithelial cells likely contributing to renal transepithelial ammonia transport and ammonia metabolism. Postulated to primarily mediate an electroneutral bidirectional transport of NH3 ammonia species according to a mechanism that implies interaction of an NH4(+) ion with acidic residues of the pore entry followed by dissociation of NH4(+) into NH3 and H(+). As a result NH3 transits through the central pore and is protonated on the extracellular side reforming NH4(+). May act as a CO2 channel providing for renal acid secretion. The polypeptide is Ammonium transporter Rh type C (RHCG) (Sus scrofa (Pig)).